Consider the following 266-residue polypeptide: U2 small nuclear ribonucleoprotein A' (266 aa).

4 LRR repeats span residues 30 to 51, 53 to 74, 75 to 95, and 97 to 118; these read ILRNLGLEGDDIAMPASLNHLA, PTHILDLTNNDLVFFPDLHHRD, DIETLLLSKNRLMVLDAALLP, and KLKSLSLAFNGIENFETLIPLS. In terms of domain architecture, LRRCT spans 132-170; it reads NPICHLSEYRQRILALVPSLEVLDFKLVSQAEKAQAVKD.

The protein belongs to the U2 small nuclear ribonucleoprotein A family. Associated with the spliceosome.

The protein resides in the nucleus. Involved in pre-mRNA splicing. The sequence is that of U2 small nuclear ribonucleoprotein A' (LEA1) from Candida glabrata (strain ATCC 2001 / BCRC 20586 / JCM 3761 / NBRC 0622 / NRRL Y-65 / CBS 138) (Yeast).